A 1312-amino-acid polypeptide reads, in one-letter code: uncharacterized protein (1312 aa).

An N-terminal signal peptide occupies residues 1–20; that stretch reads MRNNLIYTMFLSCLHFETFC. Positions 299–344 are enriched in low complexity; sequence TTTSSSTMLSSTTLLTTETETRESSSTGSTQTTTPSTEPSTTITTP. Disordered stretches follow at residues 299–503, 565–609, 645–692, 749–775, 812–864, 899–942, 1048–1079, and 1114–1165; these read TTTS…TTTY, EITS…PTGG, KETR…PTGG, SSSSKFSITPTPTPSSGTTTYNWPTGG, KTRT…GGTT, KTRT…PTGG, KTRTETTSDAQGCKATSTTQTPTTFNWPTGGT, and NTTR…TLET. A compositionally biased stretch (polar residues) spans 345-357; it reads MEQSSTVSSVQKT. Over residues 365–503 the composition is skewed to low complexity; the sequence is SSSTTVPTSA…STPATPTTTY (139 aa). Residues 565–574 show a composition bias toward basic and acidic residues; sequence EITSDAEGCK. Over residues 576 to 609 the composition is skewed to low complexity; that stretch reads TSSTPTPSSTSVHSTTATPSTTPGTTTYNWPTGG. Positions 645-659 are enriched in basic and acidic residues; it reads KETRTETTTDADGCK. Low complexity predominate over residues 660–692; that stretch reads KTSSTSSSTPSLKHSTTPTPTPGTTTYNWPTGG. Basic and acidic residues predominate over residues 813-825; that stretch reads TRTETTTDAEGCK. Over residues 826–864 the composition is skewed to low complexity; that stretch reads KTSSTSKISTTPTSPTSSKPTPTSTSMTTTYNWPTGGTT. Polar residues predominate over residues 899–908; the sequence is KTRTETTTDA. The span at 914–942 shows a compositional bias: low complexity; that stretch reads TSSTSLKPTSPSSSTASPPTTTYNWPTGG. A compositionally biased stretch (polar residues) spans 1048–1057; that stretch reads KTRTETTSDA. Residues 1063–1076 are compositionally biased toward low complexity; the sequence is TSTTQTPTTFNWPT. The span at 1114-1123 shows a compositional bias: polar residues; sequence NTTRTETTSD. Over residues 1130–1154 the composition is skewed to low complexity; the sequence is TSSGTTSTMSPGTTGGTTVSRTTNS. Over residues 1155 to 1164 the composition is skewed to polar residues; sequence NNPIDSSTLE. Residues 1239–1306 form the Sushi domain; it reads ATCSSLNLNL…WSGTPEKCVA (68 aa). 2 cysteine pairs are disulfide-bonded: Cys1241-Cys1291 and Cys1273-Cys1304.

The protein resides in the secreted. This is an uncharacterized protein from Caenorhabditis elegans.